Here is a 148-residue protein sequence, read N- to C-terminus: Ubiquitin-conjugating enzyme E2 10 (148 aa).

Positions 1-147 constitute a UBC core domain; the sequence is MASKRILKEL…ARSWTQKYAM (147 aa). C85 (glycyl thioester intermediate) is an active-site residue.

Belongs to the ubiquitin-conjugating enzyme family. Interacts with CHIP and the E3 ubiquitin ligase BB. Associates with the E3 ubiquitin ligase JMJ24. In terms of tissue distribution, ubiquitously expressed with the highest levels in rosette leaves, roots and petals.

The catalysed reaction is S-ubiquitinyl-[E1 ubiquitin-activating enzyme]-L-cysteine + [E2 ubiquitin-conjugating enzyme]-L-cysteine = [E1 ubiquitin-activating enzyme]-L-cysteine + S-ubiquitinyl-[E2 ubiquitin-conjugating enzyme]-L-cysteine.. The protein operates within protein modification; protein ubiquitination. Its function is as follows. Accepts the ubiquitin from the E1 complex and catalyzes its covalent attachment to other proteins. Mediates the selective degradation of short-lived and abnormal proteins. This chain is Ubiquitin-conjugating enzyme E2 10, found in Arabidopsis thaliana (Mouse-ear cress).